The chain runs to 231 residues: MSVGVWAVIPAAGRGVRFGSPVPKQYLPVVGRPLIVYTLEALAAHPAVCGLMVVVAEGDLAWSGWTELAGKPLLTCSGGVTRAASVLSGLLALPQVVHADDFVLVHDAARPNVALSDLERLLEAGCAHPVGAILAVPVRDTLKRAGSDGSIDGTEPRERLWRAFTPQLFRRSQLVRGLQVAAADGIEMTDEAMVMERQGLRPLLVECAESNFKITTPDDLVRFEFELARRV.

This sequence belongs to the IspD/TarI cytidylyltransferase family. IspD subfamily.

It catalyses the reaction 2-C-methyl-D-erythritol 4-phosphate + CTP + H(+) = 4-CDP-2-C-methyl-D-erythritol + diphosphate. Its pathway is isoprenoid biosynthesis; isopentenyl diphosphate biosynthesis via DXP pathway; isopentenyl diphosphate from 1-deoxy-D-xylulose 5-phosphate: step 2/6. Catalyzes the formation of 4-diphosphocytidyl-2-C-methyl-D-erythritol from CTP and 2-C-methyl-D-erythritol 4-phosphate (MEP). This is 2-C-methyl-D-erythritol 4-phosphate cytidylyltransferase from Xylella fastidiosa (strain M23).